The chain runs to 337 residues: Vacuolar protein sorting-associated protein 26B (337 aa).

Positions 311–337 (SQRFEGTSHPETRPQHSGAAAVEQEQE) are disordered.

It belongs to the VPS26 family. In terms of assembly, component of the heterotrimeric retromer cargo-selective complex (CSC) which is believed to associate with variable sorting nexins to form functionally distinct retromer complex variants.

The protein localises to the cytoplasm. It localises to the membrane. It is found in the endosome. In terms of biological role, acts as a component of the retromer cargo-selective complex (CSC). The CSC is believed to be the core functional component of retromer or respective retromer complex variants acting to prevent missorting of selected transmembrane cargo proteins into the lysosomal degradation pathway. Retromer mediates retrograde transport of cargo proteins from endosomes to the trans-Golgi network (TGN). The chain is Vacuolar protein sorting-associated protein 26B (vps26b) from Xenopus tropicalis (Western clawed frog).